Consider the following 369-residue polypeptide: Methylthioribose-1-phosphate isomerase (369 aa).

Residues 54-56, Arg95, and Gln208 contribute to the substrate site; that span reads RGA. Catalysis depends on Asp249, which acts as the Proton donor. 259-260 is a binding site for substrate; it reads NK.

This sequence belongs to the eIF-2B alpha/beta/delta subunits family. MtnA subfamily.

It catalyses the reaction 5-(methylsulfanyl)-alpha-D-ribose 1-phosphate = 5-(methylsulfanyl)-D-ribulose 1-phosphate. The protein operates within amino-acid biosynthesis; L-methionine biosynthesis via salvage pathway; L-methionine from S-methyl-5-thio-alpha-D-ribose 1-phosphate: step 1/6. Its function is as follows. Catalyzes the interconversion of methylthioribose-1-phosphate (MTR-1-P) into methylthioribulose-1-phosphate (MTRu-1-P). The chain is Methylthioribose-1-phosphate isomerase from Desulfosudis oleivorans (strain DSM 6200 / JCM 39069 / Hxd3) (Desulfococcus oleovorans).